Here is a 657-residue protein sequence, read N- to C-terminus: Serine/threonine kinase NLK (657 aa).

Residues 208–554 (SQPDRPIGYG…VEEALSHPYL (347 aa)) form the Protein kinase domain. ATP-binding positions include 214–222 (IGYGAFGVV) and Lys-237. Asp-391 acts as the Proton acceptor in catalysis.

Belongs to the protein kinase superfamily. Ser/Thr protein kinase family. Component of the beta-catenin-lit-1 complex (also called the lit-1/wrm-1 complex or the wrm-1/lit-1 kinase complex) at least composed of lit-1 and wrm-1. Interacts with wrm-1 (via N-terminus); the interaction is direct and activates lit-1 kinase activity which leads to the phosphorylation of pop-1. This promotes pop-1 interaction with par-5 and translocation of pop-1 from the nucleus to the cytoplasm. Interacts with pop-1 (when phosphorylated on 'Ser-125'); the interaction is dependent on the beta-catenin-lit-1 complex. Mg(2+) serves as cofactor.

Its subcellular location is the cytoplasm. The protein resides in the cell cortex. It localises to the nucleus. The enzyme catalyses L-seryl-[protein] + ATP = O-phospho-L-seryl-[protein] + ADP + H(+). The catalysed reaction is L-threonyl-[protein] + ATP = O-phospho-L-threonyl-[protein] + ADP + H(+). Functionally, has a role in the Wnt signaling pathway controlling the asymmetry of cell divisions during embryogenesis. Operates in the AB and EMS cell lineages influencing cell specification. Required for body wall muscle development, endoderm development, pop-1 asymmetry and T-cell division asymmetry. Component of the beta-catenin-lit-1 complex which promotes the phosphorylation, down-regulation and subcellular relocation of pop-1. Regulates plp-1 nuclear localization in embryos. Plays a role in male tail tip morphogenesis. The polypeptide is Serine/threonine kinase NLK (Caenorhabditis briggsae).